A 143-amino-acid polypeptide reads, in one-letter code: Small ribosomal subunit protein uS12 (143 aa).

At Pro62 the chain carries Hydroxyproline.

This sequence belongs to the universal ribosomal protein uS12 family.

The chain is Small ribosomal subunit protein uS12 (rps23) from Dictyostelium discoideum (Social amoeba).